We begin with the raw amino-acid sequence, 220 residues long: Fructose-6-phosphate aldolase (220 aa).

The active-site Schiff-base intermediate with substrate is Lys-85.

It belongs to the transaldolase family. Type 3A subfamily. Homodecamer.

It is found in the cytoplasm. It catalyses the reaction beta-D-fructose 6-phosphate = dihydroxyacetone + D-glyceraldehyde 3-phosphate. Functionally, catalyzes the reversible formation of fructose 6-phosphate from dihydroxyacetone and D-glyceraldehyde 3-phosphate via an aldolization reaction. This is Fructose-6-phosphate aldolase from Enterobacter sp. (strain 638).